The following is a 604-amino-acid chain: Elongation factor 4 (604 aa).

The tr-type G domain occupies 7 to 189 (SRLRNFCIIA…AVVDRIPPPA (183 aa)). Residues 19–24 (DHGKST) and 136–139 (NKID) contribute to the GTP site.

This sequence belongs to the TRAFAC class translation factor GTPase superfamily. Classic translation factor GTPase family. LepA subfamily.

The protein resides in the cell inner membrane. It carries out the reaction GTP + H2O = GDP + phosphate + H(+). Functionally, required for accurate and efficient protein synthesis under certain stress conditions. May act as a fidelity factor of the translation reaction, by catalyzing a one-codon backward translocation of tRNAs on improperly translocated ribosomes. Back-translocation proceeds from a post-translocation (POST) complex to a pre-translocation (PRE) complex, thus giving elongation factor G a second chance to translocate the tRNAs correctly. Binds to ribosomes in a GTP-dependent manner. The protein is Elongation factor 4 of Prochlorococcus marinus (strain MIT 9313).